We begin with the raw amino-acid sequence, 24 residues long: Heptapoietin A light chain (24 aa).

Heterodimer of a heavy and a light chain linked by disulfide bond(s).

Functionally, HPTA is an acidic heparin-binding growth factor for hepatocytes. The polypeptide is Heptapoietin A light chain (Oryctolagus cuniculus (Rabbit)).